Consider the following 433-residue polypeptide: MSQKDSIRSVRAREIMDSRGNPTVEVDVTLEDGSFGRAAVPSGASTGEHEAVELRDGDKKRYGGKGVQKAVDNVNAKISKSILGLSATDQLQIDGTMIALDGTANKSKLGANAILGVSMAVAKAAAVHAGLPLYRYIGGTFARELPVPMMNIINGGAHADNNIDFQEFMILPVSAPNFKEALRMGAEVFHSLKTVLKGKGLNTAVGDEGGFAPNLTSNSEAIEVILTAIEKAGYKPDLDIKIGLDCAASEFYDEKKKKYILKAEKKPEKTAEELVEYYSNLVSKYPIITMEDGLDENDWSGWKKLSEKLGKKIQLVGDDLFVTNIKKLAQGIDKGIGNSILIKVNQIGSLTETLSAIEMAKKAQYTAVVSHRSGETEDATISHIAVATNSGQIKTGSLSRTDRIAKYNELLRIEEELGKNATYSGVNTFYNLR.

Residues 37-59 are disordered; sequence RAAVPSGASTGEHEAVELRDGDK. A compositionally biased stretch (basic and acidic residues) spans 47–59; sequence GEHEAVELRDGDK. Gln166 contacts (2R)-2-phosphoglycerate. Glu208 (proton donor) is an active-site residue. Mg(2+) is bound by residues Asp245, Glu291, and Asp318. 4 residues coordinate (2R)-2-phosphoglycerate: Lys343, Arg372, Ser373, and Lys394. Lys343 acts as the Proton acceptor in catalysis.

This sequence belongs to the enolase family. The cofactor is Mg(2+).

Its subcellular location is the cytoplasm. The protein localises to the secreted. It localises to the cell surface. It catalyses the reaction (2R)-2-phosphoglycerate = phosphoenolpyruvate + H2O. Its pathway is carbohydrate degradation; glycolysis; pyruvate from D-glyceraldehyde 3-phosphate: step 4/5. Functionally, catalyzes the reversible conversion of 2-phosphoglycerate (2-PG) into phosphoenolpyruvate (PEP). It is essential for the degradation of carbohydrates via glycolysis. This chain is Enolase, found in Leptospira biflexa serovar Patoc (strain Patoc 1 / Ames).